A 664-amino-acid chain; its full sequence is Macoilin (664 aa).

A run of 4 helical transmembrane segments spans residues 28–48 (TFLY…DFVL), 75–95 (AFSV…LLFI), 120–140 (VCLP…AIRF), and 154–174 (FAAH…KSYV). Basic and acidic residues predominate over residues 253-265 (REKGKEKDKDAKK). Residues 253–274 (REKGKEKDKDAKKHNLGINNNN) form a disordered region. Position 305 is a phosphoserine (S305). The span at 320-348 (KNYKNASGVVNSSPRSHSATNGSIPSSSS) shows a compositional bias: polar residues. The tract at residues 320-367 (KNYKNASGVVNSSPRSHSATNGSIPSSSSKNEKKQKCTSKSPSAHKDL) is disordered. N324 carries N-linked (GlcNAc...) asparagine glycosylation. At S332 the chain carries Phosphoserine. N340 and N452 each carry an N-linked (GlcNAc...) asparagine glycan. The segment at 630 to 664 (TSPLSPVSPHYSSKFVETSPSGLDPNASVYQPLKK) is disordered. 2 positions are modified to phosphoserine: S631 and S634. N655 carries an N-linked (GlcNAc...) asparagine glycan.

The protein belongs to the macoilin family.

It localises to the rough endoplasmic reticulum membrane. It is found in the nucleus membrane. Functionally, plays a role in the regulation of neuronal activity. This is Macoilin (MACO1) from Sus scrofa (Pig).